Here is a 134-residue protein sequence, read N- to C-terminus: Sec-independent protein translocase protein TatB (134 aa).

The helical transmembrane segment at 2–22 (FDGIGFMELLLIGILGLVVLG) threads the bilayer. Positions 90–134 (AESVNRPYKVEDTSPVAPKASPDESPSVVEAKSSEATSENSSTPK) are disordered. The span at 123–134 (SEATSENSSTPK) shows a compositional bias: polar residues.

The protein belongs to the TatB family. In terms of assembly, the Tat system comprises two distinct complexes: a TatABC complex, containing multiple copies of TatA, TatB and TatC subunits, and a separate TatA complex, containing only TatA subunits. Substrates initially bind to the TatABC complex, which probably triggers association of the separate TatA complex to form the active translocon.

Its subcellular location is the cell inner membrane. In terms of biological role, part of the twin-arginine translocation (Tat) system that transports large folded proteins containing a characteristic twin-arginine motif in their signal peptide across membranes. Together with TatC, TatB is part of a receptor directly interacting with Tat signal peptides. TatB may form an oligomeric binding site that transiently accommodates folded Tat precursor proteins before their translocation. This Shewanella frigidimarina (strain NCIMB 400) protein is Sec-independent protein translocase protein TatB.